Reading from the N-terminus, the 57-residue chain is UPF0391 membrane protein bsl5717 (57 aa).

The next 2 helical transmembrane spans lie at 6 to 26 and 35 to 55; these read WALIFLLVSIVAGVLGFTGIS and FLFYVFVVIFLVLLILGLTIF.

The protein belongs to the UPF0391 family.

Its subcellular location is the cell membrane. The chain is UPF0391 membrane protein bsl5717 from Bradyrhizobium diazoefficiens (strain JCM 10833 / BCRC 13528 / IAM 13628 / NBRC 14792 / USDA 110).